A 934-amino-acid chain; its full sequence is MKLKKRYLLLGSTLTVSAALILSACASSQLNKGVFFTSSSADLLKNNSVPLSMFNVSPTSSFFGNAYAGLTNYVATGTNRDDGVNVTDQIKEKLVLELALSVTGYKKTTHSGLKGRAQKNGSTDSSDGSSKNDYTKFNEWDAIGTIYRDSSKSITEDPNYHKITQEATRYEFTINTSLSWVDNAGREVKQNNQPVKLSSKDFERGFETYILSSNLGFNRNGYFIDLMGLDVEKTVGMDKTNGSSDGNGKGIEITDENYDVENYRSVDDNKFNVYLTSPFPFFLSMMSKEFFFPIPHTHPKVKALKLGKDSPLKYNQNNNRKILDQANTNFDGIYGGGVNAWKDTWSVGPYYVESFNQAQIVFKRNQIYDAIITPNLPKTRQENEKPIPAIVSYFQPGATPEVFYSSYIAGGLSASAVPYSQQQDARSRFNGTGDLRWLKIQKTAQSAQVTYSGKPYVANDSTVQLNANITETEAKFLYNSESEEALTIRAGINGLINWKNLAIIDLPNSGDVNYSTVPFGIFKEKPANGTSSGTNTDGIENDYYYKINNNQRLGLIPEQTGTFQKDKNVLDTATVKLSYYSSTKTNGAQVRTASTSGSSSQTSQVSSKQVSVTKQSFISALKKVGFTGNNPLHFNIKLGNASLSSNQVDYYNALKQALTELGNDNGENLIIPEIILGDAQGPTRNEWYIGLSSVLGFSYWSPDYDGVGTWLDAATQLNSEGIGEVITYNSGSHIVRTLLLAASQNNVFNQIENKLQNNTTTNGKDWCSCITSADLFKDDPYVIKNFGTNGNNGTSASLAFTKKALSLLKFLVDNKVLKADKVKEAIKDPDKYLSKRSKIDDNKPANVSDIHIGYELKDLYDNAAQLNRFNSIWAEQDTDNAKFLITVVDSYFPVLPVSAPGLNETIPSLLKPWFSLRNAPSGIATMRDSGYIDE.

The N-terminal stretch at 1–24 (MKLKKRYLLLGSTLTVSAALILSA) is a signal peptide. A lipid anchor (N-palmitoyl cysteine) is attached at Cys25. Cys25 carries S-diacylglycerol cysteine lipidation. The segment at 111-131 (SGLKGRAQKNGSTDSSDGSSK) is disordered. Polar residues predominate over residues 119-131 (KNGSTDSSDGSSK).

The protein resides in the cell membrane. This is an uncharacterized protein from Mycoplasma genitalium (strain ATCC 33530 / DSM 19775 / NCTC 10195 / G37) (Mycoplasmoides genitalium).